The primary structure comprises 294 residues: Peroxidase-like protein 3 (294 aa).

N-linked (GlcNAc...) asparagine glycosylation is present at Asn-129.

This sequence belongs to the peroxidase family. In terms of tissue distribution, component of the acid-insoluble and acid-soluble organic matrix of calcified layers of the shell (at protein level).

The protein localises to the secreted. This is Peroxidase-like protein 3 from Lottia gigantea (Giant owl limpet).